A 1137-amino-acid polypeptide reads, in one-letter code: Dendrite extension defective protein 1 (1137 aa).

Positions 1 to 41 (MLAHTHRINKCLYGQNQMRNRHALLGALPPIFLLLLPLISC) are cleaved as a signal peptide. At 43-1005 (KFDPERIAAR…HAEEQSPRLA (963 aa)) the chain is on the extracellular side. Residues 163–302 (PFWNRNDLRN…GEWMFELSEL (140 aa)) form the NIDO 1 domain. N-linked (GlcNAc...) asparagine glycosylation is found at Asn240 and Asn416. An EGF-like; calcium-binding domain is found at 409 to 450 (DVDECKTNSTICHKNAICTNTPGRYFCMCKEGFSGDGQNDCS). 3 cysteine pairs are disulfide-bonded: Cys413–Cys426, Cys420–Cys435, and Cys437–Cys449. In terms of domain architecture, NIDO 2 spans 519-659 (PFFGPIDLSR…GTWLYRIDKA (141 aa)). N-linked (GlcNAc...) asparagine glycosylation occurs at Asn571. The span at 738–749 (IGNQQRQQTTKA) shows a compositional bias: polar residues. Disordered regions lie at residues 738-765 (IGNQQRQQTTKAVTRPRPNFSSTPHRPI), 795-856 (FRPN…PFEA), 878-897 (QTTKKQRPELSVTPQPEDLS), 906-933 (TEEDEEEAEISTETTTEMSSTTTTTKAH), and 978-998 (NSQPPKQRNDNQPTVNVGHAE). N-linked (GlcNAc...) asparagine glycosylation is present at Asn756. The span at 798–809 (NQRNGVQKSTQR) shows a compositional bias: polar residues. The span at 819 to 833 (PLKEEATTSVPREKT) shows a compositional bias: basic and acidic residues. Residues 906-915 (TEEDEEEAEI) show a composition bias toward acidic residues. Over residues 916–933 (STETTTEMSSTTTTTKAH) the composition is skewed to low complexity. Residues 978–992 (NSQPPKQRNDNQPTV) are compositionally biased toward polar residues. A helical transmembrane segment spans residues 1006-1026 (ILLPVMIILAWLVILVCIGAV). The Cytoplasmic portion of the chain corresponds to 1027–1037 (VCCKRRNSRES). A disordered region spans residues 1106–1125 (ARLSTQERQSPPSFVNNGYT).

Post-translationally, may be proteolytically cleaved and secreted.

The protein localises to the membrane. It localises to the cell projection. Its subcellular location is the dendrite. The protein resides in the secreted. Functionally, along with dyf-7, enables neurite growth and maintenance by anchoring amphid dendritic tips during neuron cell body migration in embryonic and larval development. Promotes seam cell remodeling during the dauer phase. Plays a role in positively regulating locomotion during the dauer phase. The polypeptide is Dendrite extension defective protein 1 (Caenorhabditis elegans).